The following is a 302-amino-acid chain: Phosphoribosylaminoimidazole-succinocarboxamide synthase (302 aa).

The protein belongs to the SAICAR synthetase family.

It catalyses the reaction 5-amino-1-(5-phospho-D-ribosyl)imidazole-4-carboxylate + L-aspartate + ATP = (2S)-2-[5-amino-1-(5-phospho-beta-D-ribosyl)imidazole-4-carboxamido]succinate + ADP + phosphate + 2 H(+). It functions in the pathway purine metabolism; IMP biosynthesis via de novo pathway; 5-amino-1-(5-phospho-D-ribosyl)imidazole-4-carboxamide from 5-amino-1-(5-phospho-D-ribosyl)imidazole-4-carboxylate: step 1/2. This chain is Phosphoribosylaminoimidazole-succinocarboxamide synthase, found in Cupriavidus pinatubonensis (strain JMP 134 / LMG 1197) (Cupriavidus necator (strain JMP 134)).